Reading from the N-terminus, the 745-residue chain is 1,4-alpha-glucan branching enzyme GlgB (745 aa).

Catalysis depends on Asp-416, which acts as the Nucleophile. Glu-469 functions as the Proton donor in the catalytic mechanism.

It belongs to the glycosyl hydrolase 13 family. GlgB subfamily. Monomer.

It carries out the reaction Transfers a segment of a (1-&gt;4)-alpha-D-glucan chain to a primary hydroxy group in a similar glucan chain.. It participates in glycan biosynthesis; glycogen biosynthesis. Functionally, catalyzes the formation of the alpha-1,6-glucosidic linkages in glycogen by scission of a 1,4-alpha-linked oligosaccharide from growing alpha-1,4-glucan chains and the subsequent attachment of the oligosaccharide to the alpha-1,6 position. This Shewanella sp. (strain MR-7) protein is 1,4-alpha-glucan branching enzyme GlgB.